The following is a 488-amino-acid chain: uncharacterized protein (488 aa).

Its subcellular location is the cytoplasm. The protein localises to the nucleus. This is an uncharacterized protein from Schizosaccharomyces pombe (strain 972 / ATCC 24843) (Fission yeast).